We begin with the raw amino-acid sequence, 424 residues long: UPF0597 protein Sputcn32_1209 (424 aa).

This sequence belongs to the UPF0597 family.

The protein is UPF0597 protein Sputcn32_1209 of Shewanella putrefaciens (strain CN-32 / ATCC BAA-453).